The following is a 100-amino-acid chain: Integration host factor subunit alpha (100 aa).

This sequence belongs to the bacterial histone-like protein family. As to quaternary structure, heterodimer of an alpha and a beta chain.

Functionally, this protein is one of the two subunits of integration host factor, a specific DNA-binding protein that functions in genetic recombination as well as in transcriptional and translational control. The sequence is that of Integration host factor subunit alpha from Ruegeria pomeroyi (strain ATCC 700808 / DSM 15171 / DSS-3) (Silicibacter pomeroyi).